Here is a 90-residue protein sequence, read N- to C-terminus: Progonadoliberin-3 (90 aa).

The signal sequence occupies residues 1–23 (MEANSRVMVRVLLLALVVQVTLS). Gln-24 carries the post-translational modification Pyrrolidone carboxylic acid. Gly-33 carries the glycine amide modification. The segment at 56 to 90 (LPEEASAQTQERLRPYNVINDDSSHFDRKKRSPNK) is disordered.

Belongs to the GnRH family.

It is found in the secreted. In terms of biological role, stimulates the secretion of gonadotropins. This is Progonadoliberin-3 (gnrh3) from Dicentrarchus labrax (European seabass).